Here is a 370-residue protein sequence, read N- to C-terminus: 4-hydroxy-3-methylbut-2-en-1-yl diphosphate synthase (flavodoxin) (370 aa).

4 residues coordinate [4Fe-4S] cluster: Cys-268, Cys-271, Cys-303, and Glu-310.

It belongs to the IspG family. [4Fe-4S] cluster serves as cofactor.

It catalyses the reaction (2E)-4-hydroxy-3-methylbut-2-enyl diphosphate + oxidized [flavodoxin] + H2O + 2 H(+) = 2-C-methyl-D-erythritol 2,4-cyclic diphosphate + reduced [flavodoxin]. The protein operates within isoprenoid biosynthesis; isopentenyl diphosphate biosynthesis via DXP pathway; isopentenyl diphosphate from 1-deoxy-D-xylulose 5-phosphate: step 5/6. Its function is as follows. Converts 2C-methyl-D-erythritol 2,4-cyclodiphosphate (ME-2,4cPP) into 1-hydroxy-2-methyl-2-(E)-butenyl 4-diphosphate. The chain is 4-hydroxy-3-methylbut-2-en-1-yl diphosphate synthase (flavodoxin) from Bacillus anthracis (strain A0248).